A 358-amino-acid polypeptide reads, in one-letter code: DnaJ homolog subfamily C member 18 (358 aa).

Residues 82 to 146 (NYYEILGVSR…DKRLRYDEYG (65 aa)) form the J domain. Residues 228 to 248 (AFIQLLPVLVIVIISVITQLL) traverse the membrane as a helical segment.

It is found in the endoplasmic reticulum membrane. In Macaca fascicularis (Crab-eating macaque), this protein is DnaJ homolog subfamily C member 18 (DNAJC18).